The sequence spans 704 residues: Polyribonucleotide nucleotidyltransferase (704 aa).

The Mg(2+) site is built by D490 and D496. The KH domain occupies 557–616 (PKIEMIQIKPAKIKDVIGKGGETINSIIDETGVKIDIDQDGNVSIASSDAEMIKKAIKII). An S1 motif domain is found at 626-694 (GQVYLAKVVR…KQGRVNVSRK (69 aa)).

It belongs to the polyribonucleotide nucleotidyltransferase family. Requires Mg(2+) as cofactor.

The protein localises to the cytoplasm. The catalysed reaction is RNA(n+1) + phosphate = RNA(n) + a ribonucleoside 5'-diphosphate. Functionally, involved in mRNA degradation. Catalyzes the phosphorolysis of single-stranded polyribonucleotides processively in the 3'- to 5'-direction. This chain is Polyribonucleotide nucleotidyltransferase, found in Enterococcus faecalis (strain ATCC 700802 / V583).